The primary structure comprises 513 residues: 5-aminolevulinate synthase, erythroid-specific, mitochondrial (513 aa).

Residues 1 to 18 constitute a mitochondrion transit peptide; that stretch reads MAAFLRCPLLARHPPLAR. Position 98 (Arg98) interacts with succinyl-CoA. Cys190 and Phe191 together coordinate pyridoxal 5'-phosphate. Ser212 and Lys231 together coordinate succinyl-CoA. Residues Ser264, His292, and Thr320 each coordinate pyridoxal 5'-phosphate. Lys323 is an active-site residue. Position 323 is an N6-(pyridoxal phosphate)lysine (Lys323). The pyridoxal 5'-phosphate site is built by Thr352 and Thr353. Residue Thr437 participates in succinyl-CoA binding.

This sequence belongs to the class-II pyridoxal-phosphate-dependent aminotransferase family. In terms of assembly, homodimer. The cofactor is pyridoxal 5'-phosphate. Erythroid-specific.

It localises to the mitochondrion inner membrane. It carries out the reaction succinyl-CoA + glycine + H(+) = 5-aminolevulinate + CO2 + CoA. It functions in the pathway porphyrin-containing compound metabolism; protoporphyrin-IX biosynthesis; 5-aminolevulinate from glycine: step 1/1. Catalyzes the pyridoxal 5'-phosphate (PLP)-dependent condensation of succinyl-CoA and glycine to form aminolevulinic acid (ALA), with CoA and CO2 as by-products. Contributes significantly to heme formation during erythropoiesis. This Gallus gallus (Chicken) protein is 5-aminolevulinate synthase, erythroid-specific, mitochondrial (ALAS2).